The primary structure comprises 398 residues: Acetate kinase (398 aa).

Asparagine 9 is a Mg(2+) binding site. Lysine 16 contacts ATP. Arginine 90 contacts substrate. Aspartate 147 (proton donor/acceptor) is an active-site residue. ATP is bound by residues 207-211 (HIGNG), 282-284 (DLR), and 330-334 (GVGEN). Residue glutamate 384 participates in Mg(2+) binding.

The protein belongs to the acetokinase family. In terms of assembly, homodimer. Mg(2+) is required as a cofactor. Requires Mn(2+) as cofactor.

The protein localises to the cytoplasm. The catalysed reaction is acetate + ATP = acetyl phosphate + ADP. The protein operates within metabolic intermediate biosynthesis; acetyl-CoA biosynthesis; acetyl-CoA from acetate: step 1/2. Its function is as follows. Catalyzes the formation of acetyl phosphate from acetate and ATP. Can also catalyze the reverse reaction. The protein is Acetate kinase of Staphylococcus carnosus (strain TM300).